The sequence spans 161 residues: Nucleotide-binding protein swp_1151 (161 aa).

Belongs to the YajQ family.

In terms of biological role, nucleotide-binding protein. The protein is Nucleotide-binding protein swp_1151 of Shewanella piezotolerans (strain WP3 / JCM 13877).